Consider the following 267-residue polypeptide: Undecaprenyl-diphosphatase (267 aa).

Helical transmembrane passes span 1–21, 40–60, 85–105, 111–131, 190–210, 219–239, and 245–265; these read MSLF…FLPV, GQVI…LYFW, LAMG…ALHF, ALRS…LLWW, MLMS…DVAV, DGAI…SLMM, and VSFT…LGIA.

Belongs to the UppP family.

Its subcellular location is the cell inner membrane. It carries out the reaction di-trans,octa-cis-undecaprenyl diphosphate + H2O = di-trans,octa-cis-undecaprenyl phosphate + phosphate + H(+). Its function is as follows. Catalyzes the dephosphorylation of undecaprenyl diphosphate (UPP). Confers resistance to bacitracin. In Ruegeria pomeroyi (strain ATCC 700808 / DSM 15171 / DSS-3) (Silicibacter pomeroyi), this protein is Undecaprenyl-diphosphatase.